The following is a 181-amino-acid chain: Crossover junction endodeoxyribonuclease RuvC (181 aa).

Active-site residues include D7, E67, and D139. Residues D7, E67, and D139 each coordinate Mg(2+).

It belongs to the RuvC family. In terms of assembly, homodimer which binds Holliday junction (HJ) DNA. The HJ becomes 2-fold symmetrical on binding to RuvC with unstacked arms; it has a different conformation from HJ DNA in complex with RuvA. In the full resolvosome a probable DNA-RuvA(4)-RuvB(12)-RuvC(2) complex forms which resolves the HJ. Mg(2+) serves as cofactor.

The protein localises to the cytoplasm. It carries out the reaction Endonucleolytic cleavage at a junction such as a reciprocal single-stranded crossover between two homologous DNA duplexes (Holliday junction).. Functionally, the RuvA-RuvB-RuvC complex processes Holliday junction (HJ) DNA during genetic recombination and DNA repair. Endonuclease that resolves HJ intermediates. Cleaves cruciform DNA by making single-stranded nicks across the HJ at symmetrical positions within the homologous arms, yielding a 5'-phosphate and a 3'-hydroxyl group; requires a central core of homology in the junction. The consensus cleavage sequence is 5'-(A/T)TT(C/G)-3'. Cleavage occurs on the 3'-side of the TT dinucleotide at the point of strand exchange. HJ branch migration catalyzed by RuvA-RuvB allows RuvC to scan DNA until it finds its consensus sequence, where it cleaves and resolves the cruciform DNA. The protein is Crossover junction endodeoxyribonuclease RuvC of Cupriavidus necator (strain ATCC 17699 / DSM 428 / KCTC 22496 / NCIMB 10442 / H16 / Stanier 337) (Ralstonia eutropha).